The sequence spans 317 residues: Ricin B-like lectin EULS3 (317 aa).

Over residues 1–11 (MEHHHQHHRHH) the composition is skewed to basic residues. Positions 1-157 (MEHHHQHHRH…YHKPDENRLP (157 aa)) are disordered. Over residues 25–36 (VPPPHVDAPPQP) the composition is skewed to pro residues. Positions 136–146 (HSSNQPQSSSG) are enriched in polar residues. The Ricin B-type lectin domain maps to 168–315 (TVKVYSKAEP…KGDNQLWKIF (148 aa)).

In terms of assembly, interacts (via N-terminus) with ATS3A and ATS3B. In terms of tissue distribution, expressed in roots, rosette leaves, stems, cauline leaves and flowers.

It localises to the nucleus. It is found in the cytoplasm. In terms of biological role, lectin which binds carbohydrates in vitro. Interacts through its lectin domain with glycan structures containing one or more Lewis X, Lewis Y or lactosamine motifs. May play a role in abiotic stress responses. May play a role in abscisic acid-induced stomatal closure. May play a role in disease resistance against Pseudomonas syringae through its involvement in stomatal movement. This Arabidopsis thaliana (Mouse-ear cress) protein is Ricin B-like lectin EULS3.